Consider the following 439-residue polypeptide: Cysteine desulfurase-like protein ustD (439 aa).

The disordered stretch occupies residues 1-25 (MKSVATSSLDDVDKDSVPLGSSING). Pyridoxal 5'-phosphate-binding positions include 120–121 (TT), Asn-206, and 255–257 (SWY). At Lys-258 the chain carries N6-(pyridoxal phosphate)lysine.

Belongs to the class-V pyridoxal-phosphate-dependent aminotransferase family. It depends on pyridoxal 5'-phosphate as a cofactor.

The protein operates within mycotoxin biosynthesis. In terms of biological role, cysteine desulfurase-like protein; part of the gene cluster that mediates the biosynthesis of the secondary metabolite ustiloxin B, an antimitotic tetrapeptide. First, ustA is processed by the subtilisin-like endoprotease Kex2 that is outside the ustiloxin B gene cluster, at the C-terminal side of Arg-Lys, after transfer to Golgi apparatus through the endoplasmic reticulum (ER). Cleavage by KEX2 generates 16 peptides YAIG-I to YAIG-XVI. To process the precursor peptide further, at least two peptidases are necessary to cleave the N-terminal and C-terminal sides of the Tyr-Ala-Ile-Gly core peptide which serves as backbone for the synthesis of ustiloxin B, through cyclization and modification of the tyrosine with a non-protein coding amino acid, norvaline. One of the two peptidases must be the serine peptidase ustP; and the other pepdidase is probably ustH. Macrocyclization of the core peptide derived from ustA requires the tyrosinase ustQ, as well as the homologous oxidases ustYa and ustYb, and leads to the production of the first cyclization product N-desmethylustiloxin F. For the formation of N-desmethylustiloxin F, three oxidation steps are required, hydroxylation at the benzylic position, hydroxylation at either the aromatic ring of Tyr or beta-position of Ile, and oxidative cyclization. UstQ may catalyze the oxidation of a phenol moiety, whereas the ustYa and ustYb are most likely responsible for the remaining two-step oxidations. N-desmethylustiloxin F is then methylated by ustM to yield ustiloxin F which in turn substrate of the cytochrome P450 monooxygenase ustC which catalyzes the formation of S-deoxyustiloxin H. The flavoprotein monooxygenases ustF1 and ustF2 then participate in the modification of the side chain of S-deoxyustiloxin H, leading to the synthesis of an oxime intermediate, via ustiloxin H. Finally, carboxylative dehydration performed by the cysteine desulfurase-like protein ustD yields ustiloxin B. The protein is Cysteine desulfurase-like protein ustD of Aspergillus flavus (strain ATCC 200026 / FGSC A1120 / IAM 13836 / NRRL 3357 / JCM 12722 / SRRC 167).